A 392-amino-acid polypeptide reads, in one-letter code: Lipid-A-disaccharide synthase (392 aa).

The protein belongs to the LpxB family.

It catalyses the reaction a lipid X + a UDP-2-N,3-O-bis[(3R)-3-hydroxyacyl]-alpha-D-glucosamine = a lipid A disaccharide + UDP + H(+). Its pathway is bacterial outer membrane biogenesis; LPS lipid A biosynthesis. Functionally, condensation of UDP-2,3-diacylglucosamine and 2,3-diacylglucosamine-1-phosphate to form lipid A disaccharide, a precursor of lipid A, a phosphorylated glycolipid that anchors the lipopolysaccharide to the outer membrane of the cell. The protein is Lipid-A-disaccharide synthase of Prochlorococcus marinus (strain MIT 9313).